The following is a 301-amino-acid chain: Protoheme IX farnesyltransferase (301 aa).

Helical transmembrane passes span 16-36 (VVAL…PGIP), 41-61 (IQSG…AAAI), 93-113 (VFAG…VNLI), 114-134 (TAVL…VYLK), 141-161 (IVIG…AVTG), 172-192 (SLLV…LAIF), 217-237 (QILL…ATGM), 238-258 (SGVF…WYAW), and 273-293 (FGYS…DHWL).

The protein belongs to the UbiA prenyltransferase family. Protoheme IX farnesyltransferase subfamily.

Its subcellular location is the cell inner membrane. The enzyme catalyses heme b + (2E,6E)-farnesyl diphosphate + H2O = Fe(II)-heme o + diphosphate. It participates in porphyrin-containing compound metabolism; heme O biosynthesis; heme O from protoheme: step 1/1. Converts heme B (protoheme IX) to heme O by substitution of the vinyl group on carbon 2 of heme B porphyrin ring with a hydroxyethyl farnesyl side group. The sequence is that of Protoheme IX farnesyltransferase from Xylella fastidiosa (strain 9a5c).